Reading from the N-terminus, the 430-residue chain is Adenylosuccinate synthetase (430 aa).

Residues 12 to 18 (GDEGKGK) and 40 to 42 (GHT) contribute to the GTP site. The active-site Proton acceptor is the aspartate 13. Residues aspartate 13 and glycine 40 each coordinate Mg(2+). IMP-binding positions include 13 to 16 (DEGK), 38 to 41 (NAGH), threonine 129, arginine 143, glutamine 224, threonine 239, and arginine 303. The Proton donor role is filled by histidine 41. 299–305 (TVSNRER) is a substrate binding site. Residues arginine 305, 331 to 333 (KLD), and 413 to 415 (STG) each bind GTP.

The protein belongs to the adenylosuccinate synthetase family. In terms of assembly, homodimer. Requires Mg(2+) as cofactor.

It localises to the cytoplasm. The catalysed reaction is IMP + L-aspartate + GTP = N(6)-(1,2-dicarboxyethyl)-AMP + GDP + phosphate + 2 H(+). It functions in the pathway purine metabolism; AMP biosynthesis via de novo pathway; AMP from IMP: step 1/2. In terms of biological role, plays an important role in the de novo pathway of purine nucleotide biosynthesis. Catalyzes the first committed step in the biosynthesis of AMP from IMP. This chain is Adenylosuccinate synthetase, found in Ehrlichia ruminantium (strain Welgevonden).